Consider the following 254-residue polypeptide: HLA class II histocompatibility antigen, DQ alpha 1 chain (254 aa).

A signal peptide spans Met1–Gly23. The alpha-1 stretch occupies residues Glu24–Lys119. The Extracellular portion of the chain corresponds to Glu24–Glu216. Residues Asn103 and Asn143 are each glycosylated (N-linked (GlcNAc...) asparagine). Residues Pro112–Glu204 form the Ig-like C1-type domain. An alpha-2 region spans residues Ser120–Trp203. Residues Cys132 and Cys188 are joined by a disulfide bond. The segment at Glu204–Glu216 is connecting peptide. A helical transmembrane segment spans residues Thr217–Ile239. Residues Arg240 to Leu254 are Cytoplasmic-facing.

It belongs to the MHC class II family. In terms of assembly, heterodimer of an alpha and a beta subunit; also referred as MHC class II molecule. In the endoplasmic reticulum (ER) it forms a heterononamer; 3 MHC class II molecules bind to a CD74 homotrimer (also known as invariant chain or HLA class II histocompatibility antigen gamma chain). In the endosomal/lysosomal system; CD74 undergoes sequential degradation by various proteases; leaving a small fragment termed CLIP on each MHC class II molecule. MHC class II molecule interacts with HLA_DM, and HLA_DO in B-cells, in order to release CLIP and facilitate the binding of antigenic peptides.

The protein localises to the cell membrane. Its subcellular location is the endoplasmic reticulum membrane. It localises to the golgi apparatus. The protein resides in the trans-Golgi network membrane. It is found in the endosome membrane. The protein localises to the lysosome membrane. Functionally, binds peptides derived from antigens that access the endocytic route of antigen presenting cells (APC) and presents them on the cell surface for recognition by the CD4 T-cells. The peptide binding cleft accommodates peptides of 10-30 residues. The peptides presented by MHC class II molecules are generated mostly by degradation of proteins that access the endocytic route, where they are processed by lysosomal proteases and other hydrolases. Exogenous antigens that have been endocytosed by the APC are thus readily available for presentation via MHC II molecules, and for this reason this antigen presentation pathway is usually referred to as exogenous. As membrane proteins on their way to degradation in lysosomes as part of their normal turn-over are also contained in the endosomal/lysosomal compartments, exogenous antigens must compete with those derived from endogenous components. Autophagy is also a source of endogenous peptides, autophagosomes constitutively fuse with MHC class II loading compartments. In addition to APCs, other cells of the gastrointestinal tract, such as epithelial cells, express MHC class II molecules and CD74 and act as APCs, which is an unusual trait of the GI tract. To produce a MHC class II molecule that presents an antigen, three MHC class II molecules (heterodimers of an alpha and a beta chain) associate with a CD74 trimer in the ER to form a heterononamer. Soon after the entry of this complex into the endosomal/lysosomal system where antigen processing occurs, CD74 undergoes a sequential degradation by various proteases, including CTSS and CTSL, leaving a small fragment termed CLIP (class-II-associated invariant chain peptide). The removal of CLIP is facilitated by HLA-DM via direct binding to the alpha-beta-CLIP complex so that CLIP is released. HLA-DM stabilizes MHC class II molecules until primary high affinity antigenic peptides are bound. The MHC II molecule bound to a peptide is then transported to the cell membrane surface. In B-cells, the interaction between HLA-DM and MHC class II molecules is regulated by HLA-DO. Primary dendritic cells (DCs) also to express HLA-DO. Lysosomal microenvironment has been implicated in the regulation of antigen loading into MHC II molecules, increased acidification produces increased proteolysis and efficient peptide loading. The chain is HLA class II histocompatibility antigen, DQ alpha 1 chain (HLA-DQA1) from Homo sapiens (Human).